A 316-amino-acid chain; its full sequence is 4-hydroxyphenylacetate decarboxylase activating enzyme (316 aa).

One can recognise a Radical SAM core domain in the interval 20–307 (HDGPGCRTTV…QDIFLDNGIA (288 aa)). Cys34, Cys38, Cys41, Cys60, Cys66, Cys69, and Cys105 together coordinate [4Fe-4S] cluster. An S-adenosyl-L-methionine-binding site is contributed by 40 to 42 (WCA). The 4Fe-4S ferredoxin-type domain occupies 84 to 115 (NKPVIDWNICKDCESFECVNSCYYNAFKLCAK). S-adenosyl-L-methionine contacts are provided by residues Gly144, 193-195 (DIK), and His267.

This sequence belongs to the organic radical-activating enzymes family. In terms of assembly, monomer. [4Fe-4S] cluster serves as cofactor.

The enzyme catalyses glycyl-[protein] + reduced [flavodoxin] + S-adenosyl-L-methionine = glycin-2-yl radical-[protein] + semiquinone [flavodoxin] + 5'-deoxyadenosine + L-methionine + H(+). Functionally, catalyzes activation of 4-hydroxyphenylacetate decarboxylase under anaerobic conditions by generation of an organic free radical on a glycine residue, via a homolytic cleavage of S-adenosyl-L-methionine (SAM). This chain is 4-hydroxyphenylacetate decarboxylase activating enzyme, found in Clostridioides difficile (Peptoclostridium difficile).